The chain runs to 98 residues: MVNSLDMNVIKYPIITDKATRLLANNQYSFIVSPKSDKPTIKAAIEYLFNVKVVKINTAHLPKKKKRIGQYLGWKAHYKKAIVTLSEGDTINLFAEEN.

The protein belongs to the universal ribosomal protein uL23 family. Part of the 50S ribosomal subunit.

The protein resides in the plastid. Its subcellular location is the chloroplast. Functionally, binds to 23S rRNA. The sequence is that of Large ribosomal subunit protein uL23c (rpl23) from Thalassiosira pseudonana (Marine diatom).